The sequence spans 113 residues: Cell cycle protein GpsB (113 aa).

Residues leucine 36–proline 68 adopt a coiled-coil conformation.

The protein belongs to the GpsB family. As to quaternary structure, forms polymers through the coiled coil domains. Interacts with PBP1, MreC and EzrA.

It is found in the cytoplasm. Its function is as follows. Divisome component that associates with the complex late in its assembly, after the Z-ring is formed, and is dependent on DivIC and PBP2B for its recruitment to the divisome. Together with EzrA, is a key component of the system that regulates PBP1 localization during cell cycle progression. Its main role could be the removal of PBP1 from the cell pole after pole maturation is completed. Also contributes to the recruitment of PBP1 to the division complex. Not essential for septum formation. The sequence is that of Cell cycle protein GpsB from Listeria monocytogenes serotype 4b (strain CLIP80459).